A 391-amino-acid polypeptide reads, in one-letter code: MIKRIAILGSTGSIGRQTLEVVDRSEGRLTVQALAAGSNWKELLAQIEIYRPRLAAMMETEAAERLAEALWERGLPIPVVTGEAGLAEAACLPEVDTVVTAVSGAIGLGPTMAAIEAGKEIALANKETLVAAGPLVMAAARRREVTILPVDSEHSAIFQCLQGQDRRLARLILTASGGPFRDKSLEALHQVTPEDALRHPNWRMGPKITIDSASLMNKGLEVIEARWLFDIDFDDIEVLIHPQSIVHSMVEFADGSILSQMGLPDMRLPIQYALTYPERWQTGWPRLDITKTAALTFRRPDLERFPSLELAITAGRTGGSLPAVMNAANEVAVHAFLDHRIGFMDIPRIVREAMEAHEWQKEPDLPAIRQADAWARRFATERVGEGREVSA.

Residues Thr-11, Gly-12, Ser-13, Ile-14, Gly-37, Asn-39, and Asn-125 each contribute to the NADPH site. Position 126 (Lys-126) interacts with 1-deoxy-D-xylulose 5-phosphate. Glu-127 contacts NADPH. Position 151 (Asp-151) interacts with Mn(2+). Positions 152, 153, 176, and 199 each coordinate 1-deoxy-D-xylulose 5-phosphate. Position 153 (Glu-153) interacts with Mn(2+). Residue Gly-205 coordinates NADPH. The 1-deoxy-D-xylulose 5-phosphate site is built by Ser-212, Asn-217, Lys-218, and Glu-221. Glu-221 is a Mn(2+) binding site.

It belongs to the DXR family. It depends on Mg(2+) as a cofactor. Mn(2+) serves as cofactor.

The enzyme catalyses 2-C-methyl-D-erythritol 4-phosphate + NADP(+) = 1-deoxy-D-xylulose 5-phosphate + NADPH + H(+). It functions in the pathway isoprenoid biosynthesis; isopentenyl diphosphate biosynthesis via DXP pathway; isopentenyl diphosphate from 1-deoxy-D-xylulose 5-phosphate: step 1/6. Catalyzes the NADPH-dependent rearrangement and reduction of 1-deoxy-D-xylulose-5-phosphate (DXP) to 2-C-methyl-D-erythritol 4-phosphate (MEP). The polypeptide is 1-deoxy-D-xylulose 5-phosphate reductoisomerase (Heliobacterium modesticaldum (strain ATCC 51547 / Ice1)).